The following is a 484-amino-acid chain: ATP synthase subunit beta (484 aa).

The segment at 104 to 123 (ERGPIGSKQTMPIHADAPPF) is disordered. An ATP-binding site is contributed by 156–163 (GGAGVGKT).

This sequence belongs to the ATPase alpha/beta chains family. As to quaternary structure, F-type ATPases have 2 components, CF(1) - the catalytic core - and CF(0) - the membrane proton channel. CF(1) has five subunits: alpha(3), beta(3), gamma(1), delta(1), epsilon(1). CF(0) has three main subunits: a(1), b(2) and c(9-12). The alpha and beta chains form an alternating ring which encloses part of the gamma chain. CF(1) is attached to CF(0) by a central stalk formed by the gamma and epsilon chains, while a peripheral stalk is formed by the delta and b chains.

It localises to the cell inner membrane. The enzyme catalyses ATP + H2O + 4 H(+)(in) = ADP + phosphate + 5 H(+)(out). Functionally, produces ATP from ADP in the presence of a proton gradient across the membrane. The catalytic sites are hosted primarily by the beta subunits. The sequence is that of ATP synthase subunit beta from Zymomonas mobilis subsp. mobilis (strain ATCC 31821 / ZM4 / CP4).